A 517-amino-acid chain; its full sequence is 2-isopropylmalate synthase (517 aa).

Residues 5 to 267 enclose the Pyruvate carboxyltransferase domain; it reads VIIFDTTLRD…HTNVRCQEIY (263 aa). Positions 14, 202, 204, and 238 each coordinate Mn(2+). The interval 392–517 is regulatory domain; that stretch reads RLKCFHVDSS…QRKYIKKNNN (126 aa).

It belongs to the alpha-IPM synthase/homocitrate synthase family. LeuA type 1 subfamily. In terms of assembly, homodimer. Requires Mn(2+) as cofactor.

The protein resides in the cytoplasm. It carries out the reaction 3-methyl-2-oxobutanoate + acetyl-CoA + H2O = (2S)-2-isopropylmalate + CoA + H(+). Its pathway is amino-acid biosynthesis; L-leucine biosynthesis; L-leucine from 3-methyl-2-oxobutanoate: step 1/4. Catalyzes the condensation of the acetyl group of acetyl-CoA with 3-methyl-2-oxobutanoate (2-ketoisovalerate) to form 3-carboxy-3-hydroxy-4-methylpentanoate (2-isopropylmalate). This Blochmanniella pennsylvanica (strain BPEN) protein is 2-isopropylmalate synthase.